A 356-amino-acid chain; its full sequence is UDP-N-acetylglucosamine--N-acetylmuramyl-(pentapeptide) pyrophosphoryl-undecaprenol N-acetylglucosamine transferase (356 aa).

UDP-N-acetyl-alpha-D-glucosamine is bound by residues 13 to 15 (TGG), asparagine 125, arginine 161, serine 189, isoleucine 243, and glutamine 288.

It belongs to the glycosyltransferase 28 family. MurG subfamily.

Its subcellular location is the cell inner membrane. The enzyme catalyses di-trans,octa-cis-undecaprenyl diphospho-N-acetyl-alpha-D-muramoyl-L-alanyl-D-glutamyl-meso-2,6-diaminopimeloyl-D-alanyl-D-alanine + UDP-N-acetyl-alpha-D-glucosamine = di-trans,octa-cis-undecaprenyl diphospho-[N-acetyl-alpha-D-glucosaminyl-(1-&gt;4)]-N-acetyl-alpha-D-muramoyl-L-alanyl-D-glutamyl-meso-2,6-diaminopimeloyl-D-alanyl-D-alanine + UDP + H(+). Its pathway is cell wall biogenesis; peptidoglycan biosynthesis. Cell wall formation. Catalyzes the transfer of a GlcNAc subunit on undecaprenyl-pyrophosphoryl-MurNAc-pentapeptide (lipid intermediate I) to form undecaprenyl-pyrophosphoryl-MurNAc-(pentapeptide)GlcNAc (lipid intermediate II). In Cupriavidus metallidurans (strain ATCC 43123 / DSM 2839 / NBRC 102507 / CH34) (Ralstonia metallidurans), this protein is UDP-N-acetylglucosamine--N-acetylmuramyl-(pentapeptide) pyrophosphoryl-undecaprenol N-acetylglucosamine transferase.